A 172-amino-acid chain; its full sequence is Large ribosomal subunit protein uL10 (172 aa).

This sequence belongs to the universal ribosomal protein uL10 family. In terms of assembly, part of the ribosomal stalk of the 50S ribosomal subunit. The N-terminus interacts with L11 and the large rRNA to form the base of the stalk. The C-terminus forms an elongated spine to which L12 dimers bind in a sequential fashion forming a multimeric L10(L12)X complex.

Forms part of the ribosomal stalk, playing a central role in the interaction of the ribosome with GTP-bound translation factors. This is Large ribosomal subunit protein uL10 from Rhodopseudomonas palustris (strain TIE-1).